Here is a 487-residue protein sequence, read N- to C-terminus: Glutamate--tRNA ligase (487 aa).

Residues 11-21 (PSPTGYPHLGN) carry the 'HIGH' region motif. C108, C110, C135, and D137 together coordinate Zn(2+). Positions 245 to 249 (KLSKR) match the 'KMSKS' region motif. Position 248 (K248) interacts with ATP.

The protein belongs to the class-I aminoacyl-tRNA synthetase family. Glutamate--tRNA ligase type 1 subfamily. Monomer. The cofactor is Zn(2+).

It is found in the cytoplasm. It catalyses the reaction tRNA(Glu) + L-glutamate + ATP = L-glutamyl-tRNA(Glu) + AMP + diphosphate. Catalyzes the attachment of glutamate to tRNA(Glu) in a two-step reaction: glutamate is first activated by ATP to form Glu-AMP and then transferred to the acceptor end of tRNA(Glu). This chain is Glutamate--tRNA ligase, found in Dehalococcoides mccartyi (strain CBDB1).